The following is a 329-amino-acid chain: Diaminopimelate epimerase (329 aa).

The substrate site is built by Asn14 and Asn73. The active-site Proton donor is Cys82. Residues 83–84 (GN), Asn170, Asn206, and 224–225 (ER) contribute to the substrate site. Cys233 acts as the Proton acceptor in catalysis. Residue 234-235 (GT) coordinates substrate.

This sequence belongs to the diaminopimelate epimerase family. In terms of assembly, homodimer.

The protein resides in the cytoplasm. It carries out the reaction (2S,6S)-2,6-diaminopimelate = meso-2,6-diaminopimelate. Its pathway is amino-acid biosynthesis; L-lysine biosynthesis via DAP pathway; DL-2,6-diaminopimelate from LL-2,6-diaminopimelate: step 1/1. Its function is as follows. Catalyzes the stereoinversion of LL-2,6-diaminopimelate (L,L-DAP) to meso-diaminopimelate (meso-DAP), a precursor of L-lysine and an essential component of the bacterial peptidoglycan. The polypeptide is Diaminopimelate epimerase (Listeria innocua serovar 6a (strain ATCC BAA-680 / CLIP 11262)).